The primary structure comprises 273 residues: Putative pyruvate, phosphate dikinase regulatory protein (273 aa).

153 to 160 (GVSRTSKS) contacts ADP.

This sequence belongs to the pyruvate, phosphate/water dikinase regulatory protein family. PDRP subfamily.

The enzyme catalyses N(tele)-phospho-L-histidyl/L-threonyl-[pyruvate, phosphate dikinase] + ADP = N(tele)-phospho-L-histidyl/O-phospho-L-threonyl-[pyruvate, phosphate dikinase] + AMP + H(+). It catalyses the reaction N(tele)-phospho-L-histidyl/O-phospho-L-threonyl-[pyruvate, phosphate dikinase] + phosphate + H(+) = N(tele)-phospho-L-histidyl/L-threonyl-[pyruvate, phosphate dikinase] + diphosphate. In terms of biological role, bifunctional serine/threonine kinase and phosphorylase involved in the regulation of the pyruvate, phosphate dikinase (PPDK) by catalyzing its phosphorylation/dephosphorylation. This is Putative pyruvate, phosphate dikinase regulatory protein from Ehrlichia ruminantium (strain Gardel).